Consider the following 477-residue polypeptide: Aspartyl/glutamyl-tRNA(Asn/Gln) amidotransferase subunit B (477 aa).

It belongs to the GatB/GatE family. GatB subfamily. As to quaternary structure, heterotrimer of A, B and C subunits.

It catalyses the reaction L-glutamyl-tRNA(Gln) + L-glutamine + ATP + H2O = L-glutaminyl-tRNA(Gln) + L-glutamate + ADP + phosphate + H(+). The enzyme catalyses L-aspartyl-tRNA(Asn) + L-glutamine + ATP + H2O = L-asparaginyl-tRNA(Asn) + L-glutamate + ADP + phosphate + 2 H(+). Allows the formation of correctly charged Asn-tRNA(Asn) or Gln-tRNA(Gln) through the transamidation of misacylated Asp-tRNA(Asn) or Glu-tRNA(Gln) in organisms which lack either or both of asparaginyl-tRNA or glutaminyl-tRNA synthetases. The reaction takes place in the presence of glutamine and ATP through an activated phospho-Asp-tRNA(Asn) or phospho-Glu-tRNA(Gln). In Coxiella burnetii (strain CbuG_Q212) (Coxiella burnetii (strain Q212)), this protein is Aspartyl/glutamyl-tRNA(Asn/Gln) amidotransferase subunit B.